The primary structure comprises 424 residues: Serine--tRNA ligase (424 aa).

231 to 233 (TAE) contacts L-serine. ATP is bound at residue 262–264 (RAE). Residue E285 participates in L-serine binding. 349–352 (EISS) contributes to the ATP binding site. S385 contributes to the L-serine binding site.

Belongs to the class-II aminoacyl-tRNA synthetase family. Type-1 seryl-tRNA synthetase subfamily. Homodimer. The tRNA molecule binds across the dimer.

It is found in the cytoplasm. The enzyme catalyses tRNA(Ser) + L-serine + ATP = L-seryl-tRNA(Ser) + AMP + diphosphate + H(+). It carries out the reaction tRNA(Sec) + L-serine + ATP = L-seryl-tRNA(Sec) + AMP + diphosphate + H(+). The protein operates within aminoacyl-tRNA biosynthesis; selenocysteinyl-tRNA(Sec) biosynthesis; L-seryl-tRNA(Sec) from L-serine and tRNA(Sec): step 1/1. Functionally, catalyzes the attachment of serine to tRNA(Ser). Is also able to aminoacylate tRNA(Sec) with serine, to form the misacylated tRNA L-seryl-tRNA(Sec), which will be further converted into selenocysteinyl-tRNA(Sec). The protein is Serine--tRNA ligase of Geobacillus thermodenitrificans (strain NG80-2).